Here is an 875-residue protein sequence, read N- to C-terminus: MSLIPITFYFLFLFFSNFRGVFAVPNIHLCHFEQRDALLEFKNEFKIKKPCFGCPSPLKTKSWENGSDCCHWDGITCDAKTGEVIEIDLMCSCLHGWFHSNSNLSMLQNFHFLTTLDLSYNHLSGQISSSIGNLSHLTTLDLSGNNFSGWIPSSLGNLFHLTSLHLYDNNFGGEIPSSLGNLSYLTFLDLSTNNFVGEIPSSFGSLNQLSILRLDNNKLSGNLPLEVINLTKLSEISLSHNQFTGTLPPNITSLSILESFSASGNNFVGTIPSSLFTIPSITLIFLDNNQLSGTLEFGNISSPSNLLVLQLGGNNLRGPIPTSISRLVNLRTLDLSHFNIQGQVDFNIFSHLKLLGNLYLSHSNTTTTIDLNAVLSCFKMLISLDLSGNHVLVTNKSSVSDPPLGLIGSLNLSGCGITEFPDILRTQRQMRTLDISNNKIKGQVPSWLLLQLEYMHISNNNFIGFERSTKLEKTVVPKPSMKHFFGSNNNFSGKIPSFICSLRSLIILDLSNNNFSGAIPPCVGKFKSTLSDLNLRRNRLSGSLPKTIIKSLRSLDVSHNELEGKLPRSLIHFSTLEVLNVESNRINDTFPFWLSSLKKLQVLVLRSNAFHGRIHKTRFPKLRIIDISRNHFNGTLPSDCFVEWTGMHSLEKNEDRFNEKYMGSGYYHDSMVLMNKGLEMELVRILKIYTALDFSGNKFEGEIPRSIGLLKELHILNLSSNGFTGHIPSSMGNLRELESLDVSRNKLSGEIPQELGNLSYLAYMNFSHNQLVGQVPGGTQFRTQSASSFEENLGLCGRPLEECRVVHEPTPSGESETLESEQVLSWIAAAIGFTPGIVLGLTIGHIVLSSKPRWFFKVLYINNSRRRRRTRSEKS.

The N-terminal stretch at 1–23 is a signal peptide; the sequence is MSLIPITFYFLFLFFSNFRGVFA. Topologically, residues 24–822 are extracellular; the sequence is VPNIHLCHFE…GESETLESEQ (799 aa). Residues asparagine 65, asparagine 103, asparagine 133, asparagine 146, and asparagine 181 are each glycosylated (N-linked (GlcNAc...) asparagine). LRR repeat units lie at residues 110–133, 134–157, 159–182, 183–205, 206–230, 231–254, 256–278, 280–302, 303–327, and 329–351; these read FHFL…SIGN, LSHL…SLGN, FHLT…LGNL, SYLT…SFGS, LNQL…VINL, TKLS…ITSL, ILES…LFTI, SITL…NISS, PSNL…ISRL, and NLRT…IFSH. N-linked (GlcNAc...) asparagine glycosylation is found at asparagine 229 and asparagine 250. An N-linked (GlcNAc...) asparagine glycan is attached at asparagine 299. Residues 352-377 form an LRR 11; degenerate repeat; it reads LKLLGNLYLSHSNTTTTIDLNAVLSC. 3 N-linked (GlcNAc...) asparagine glycosylation sites follow: asparagine 364, asparagine 395, and asparagine 411. LRR repeat units lie at residues 378–401, 404–427, 428–451, 455–477, 479–502, 503–528, 530–549, 550–573, 575–596, 597–619, 620–643, 686–710, 711–734, 735–758, and 760–783; these read FKML…SVSD, LGLI…LRTQ, RQMR…LLLQ, MHIS…TVVP, PSMK…ICSL, RSLI…KFKS, LSDL…KTII, KSLR…LIHF, TLEV…WLSS, LKKL…KTRF, PKLR…CFVE, LKIY…IGLL, KELH…MGNL, RELE…LGNL, and YLAY…QFRT. Residues asparagine 490 and asparagine 514 are each glycosylated (N-linked (GlcNAc...) asparagine). Asparagine 587 is a glycosylation site (N-linked (GlcNAc...) asparagine). Residue asparagine 633 is glycosylated (N-linked (GlcNAc...) asparagine). 3 N-linked (GlcNAc...) asparagine glycosylation sites follow: asparagine 717, asparagine 757, and asparagine 765. A helical membrane pass occupies residues 823 to 843; it reads VLSWIAAAIGFTPGIVLGLTI. Topologically, residues 844–875 are cytoplasmic; it reads GHIVLSSKPRWFFKVLYINNSRRRRRTRSEKS.

The protein belongs to the RLP family.

It localises to the cell membrane. This Arabidopsis thaliana (Mouse-ear cress) protein is Receptor-like protein 33.